A 223-amino-acid chain; its full sequence is Lipoprotein-releasing system ATP-binding protein LolD (223 aa).

In terms of domain architecture, ABC transporter spans 2–223 (IQVRNLKKTF…LRDGEIVTCA (222 aa)). An ATP-binding site is contributed by 38-45 (GVSGAGKT).

The protein belongs to the ABC transporter superfamily. Lipoprotein translocase (TC 3.A.1.125) family. The complex is composed of two ATP-binding proteins (LolD) and two transmembrane proteins (LolC and LolE).

It localises to the cell inner membrane. Functionally, part of the ABC transporter complex LolCDE involved in the translocation of mature outer membrane-directed lipoproteins, from the inner membrane to the periplasmic chaperone, LolA. Responsible for the formation of the LolA-lipoprotein complex in an ATP-dependent manner. The protein is Lipoprotein-releasing system ATP-binding protein LolD of Syntrophus aciditrophicus (strain SB).